The chain runs to 158 residues: Phosphopantetheine adenylyltransferase (158 aa).

Position 10 (Thr10) interacts with substrate. ATP-binding positions include Thr10 to Phe11 and His18. 3 residues coordinate substrate: Lys42, Leu74, and Arg88. Residues Gly89–Arg91, Glu99, and Trp124–Thr130 each bind ATP.

The protein belongs to the bacterial CoaD family. As to quaternary structure, homohexamer. The cofactor is Mg(2+).

Its subcellular location is the cytoplasm. It carries out the reaction (R)-4'-phosphopantetheine + ATP + H(+) = 3'-dephospho-CoA + diphosphate. Its pathway is cofactor biosynthesis; coenzyme A biosynthesis; CoA from (R)-pantothenate: step 4/5. In terms of biological role, reversibly transfers an adenylyl group from ATP to 4'-phosphopantetheine, yielding dephospho-CoA (dPCoA) and pyrophosphate. This chain is Phosphopantetheine adenylyltransferase, found in Actinobacillus pleuropneumoniae serotype 7 (strain AP76).